Consider the following 631-residue polypeptide: Transmembrane and coiled-coil domain-containing protein 4 (631 aa).

Residues 1–26 form a disordered region; sequence MATWNRPHPRLPVAPEPVAEGESQQP. Residues 153 to 183 adopt a coiled-coil conformation; it reads EEVFLESLKDAKEEESETAEESRKRKEKRRK. 4 consecutive transmembrane segments (helical) span residues 187 to 203, 204 to 220, 228 to 248, and 343 to 363; these read YLLIGLATVGGGTVIGV, TGGLAAPLVAAGAATII, LGSVAGIAVMTSLFGAAGAGL, and LSGIVAALTLPASLLSVANVI. The disordered stretch occupies residues 523-631; the sequence is WSEKGLPLAP…ETQESCAELD (109 aa). Residues 571 to 590 show a composition bias toward polar residues; the sequence is IPSSASQAQVPAGLDQSTED.

It belongs to the TMCO4 family.

It localises to the membrane. This chain is Transmembrane and coiled-coil domain-containing protein 4 (Tmco4), found in Rattus norvegicus (Rat).